Reading from the N-terminus, the 319-residue chain is GPI-specific phospholipase A2-like PGAP3 (319 aa).

The signal sequence occupies residues 1-23; the sequence is MAGRTARLVLLAGAAALASGSQG. Over 24–101 the chain is Lumenal; the sequence is DREPVYRDCV…GKWPFSRFLC (78 aa). Residue Asn-40 is glycosylated (N-linked (GlcNAc...) asparagine). Residues 102 to 122 traverse the membrane as a helical segment; the sequence is FQEPASAVASFLNGLASLVML. Residues 123 to 135 lie on the Cytoplasmic side of the membrane; that stretch reads CRYRTSVPASSPM. The chain crosses the membrane as a helical span at residues 136 to 156; the sequence is YPTCVAFAWVSLNAWFWSTVF. Residues 157–169 lie on the Lumenal side of the membrane; sequence HTRDTDLTEKMDY. A helical membrane pass occupies residues 170 to 190; it reads FCASTVILHSIYLCCVRTVGL. At 191–200 the chain is on the cytoplasmic side; it reads QHPAMASAFR. The helical transmembrane segment at 201–221 threads the bilayer; that stretch reads ALLLLLLTAHVSYLSLIHFDY. Over 222–224 the chain is Lumenal; that stretch reads GYN. A helical membrane pass occupies residues 225-245; the sequence is MAANVAIGLLNAAWWLAWCLW. Residues 246 to 257 are Cytoplasmic-facing; that stretch reads NQRLPHVHKCVA. The chain crosses the membrane as a helical span at residues 258 to 278; sequence VVLLLQGLSLLELLDFPPLFW. Topologically, residues 279-281 are lumenal; sequence VLD. The chain crosses the membrane as a helical span at residues 282–302; the sequence is AHAIWHISTIPVHVLFFSFLE. Residues 303–319 lie on the Cytoplasmic side of the membrane; it reads DDSLYLLKESEAKVKLD.

This sequence belongs to the PGAP3 family.

The protein resides in the golgi apparatus membrane. Its function is as follows. Involved in the fatty acid remodeling steps of GPI-anchor maturation where the unsaturated acyl chain at sn-2 of inositol phosphate is replaced by a saturated stearoyl chain. May catalyze the first step of the fatty acid remodeling, by removing the unsaturated acyl chain at sn-2 of inositol phosphate, generating a lyso-GPI intermediate. The fatty acid remodeling steps is critical for the integration of GPI-APs into lipid rafts. The polypeptide is GPI-specific phospholipase A2-like PGAP3 (Bos taurus (Bovine)).